The sequence spans 428 residues: C4-dicarboxylate transport protein (428 aa).

The next 9 membrane-spanning stretches (helical) occupy residues 4–24, 44–64, 76–96, 142–162, 184–204, 222–242, 289–309, 326–346, and 352–372; these read SLFK…ILLG, LIKM…IAGM, VALL…LIIV, IGAF…MFGF, VIFG…FGAM, LIVC…GSIA, VVGL…SIYL, IFHQ…AAGV, and IVLA…LALI.

It belongs to the dicarboxylate/amino acid:cation symporter (DAACS) (TC 2.A.23) family.

Its subcellular location is the cell inner membrane. Its function is as follows. Responsible for the transport of dicarboxylates such as succinate, fumarate, and malate from the periplasm across the membrane. The polypeptide is C4-dicarboxylate transport protein (Citrobacter koseri (strain ATCC BAA-895 / CDC 4225-83 / SGSC4696)).